Consider the following 63-residue polypeptide: Putative flagellar calcium-binding protein (63 aa).

Residues 1-11 (MGCISSKSTQT) show a composition bias toward polar residues. The disordered stretch occupies residues 1 to 23 (MGCISSKSTQTGKKEGKTAAERK). Over residues 12 to 23 (GKKEGKTAAERK) the composition is skewed to basic and acidic residues. The region spanning 40–63 (EDKARRIELFKKFDKNNTGKLSME) is the EF-hand domain. Positions 53, 55, 57, and 59 each coordinate Ca(2+).

This sequence belongs to the calflagin family.

It is found in the cell projection. It localises to the cilium. The protein localises to the flagellum. The protein is Putative flagellar calcium-binding protein (CABP) of Crithidia fasciculata.